Here is a 123-residue protein sequence, read N- to C-terminus: Nitrogenase-stabilizing/protective protein NifW (123 aa).

This sequence belongs to the NifW family. In terms of assembly, homotrimer; associates with NifD.

Functionally, may protect the nitrogenase Fe-Mo protein from oxidative damage. In Rhodopseudomonas palustris (strain HaA2), this protein is Nitrogenase-stabilizing/protective protein NifW.